Reading from the N-terminus, the 496-residue chain is Putative zinc finger CCCH domain-containing protein 48 (496 aa).

Disordered regions lie at residues 1–77 (MADS…QPVH) and 108–194 (MGAG…HPDD). A compositionally biased stretch (acidic residues) spans 143-156 (HLAEEEEEEEEEHY). 3 consecutive C3H1-type zinc fingers follow at residues 377–406 (EHKT…HGED), 439–467 (KYKT…HGEV), and 469–496 (LGKK…RHSY).

This Oryza sativa subsp. japonica (Rice) protein is Putative zinc finger CCCH domain-containing protein 48.